The following is a 202-amino-acid chain: Probable septum site-determining protein MinC (202 aa).

The protein belongs to the MinC family. In terms of assembly, interacts with MinD and FtsZ.

In terms of biological role, cell division inhibitor that blocks the formation of polar Z ring septums. Rapidly oscillates between the poles of the cell to destabilize FtsZ filaments that have formed before they mature into polar Z rings. Prevents FtsZ polymerization. This is Probable septum site-determining protein MinC from Sulfurihydrogenibium sp. (strain YO3AOP1).